A 235-amino-acid polypeptide reads, in one-letter code: Small ribosomal subunit protein eS4 (235 aa).

The S4 RNA-binding domain maps to 38 to 99; the sequence is VTLLSIIRDY…GESYRVVYND (62 aa).

It belongs to the eukaryotic ribosomal protein eS4 family.

The chain is Small ribosomal subunit protein eS4 (rps4e) from Thermoplasma acidophilum (strain ATCC 25905 / DSM 1728 / JCM 9062 / NBRC 15155 / AMRC-C165).